The primary structure comprises 116 residues: Large ribosomal subunit protein bL17 (116 aa).

The protein belongs to the bacterial ribosomal protein bL17 family. Part of the 50S ribosomal subunit. Contacts protein L32.

The chain is Large ribosomal subunit protein bL17 from Synechococcus sp. (strain JA-2-3B'a(2-13)) (Cyanobacteria bacterium Yellowstone B-Prime).